The sequence spans 158 residues: Transcription elongation factor GreA (158 aa).

Positions 45 to 72 (AEYHAAREQQSFIEGRIKQLEGELSHAE) form a coiled coil.

It belongs to the GreA/GreB family.

Necessary for efficient RNA polymerase transcription elongation past template-encoded arresting sites. The arresting sites in DNA have the property of trapping a certain fraction of elongating RNA polymerases that pass through, resulting in locked ternary complexes. Cleavage of the nascent transcript by cleavage factors such as GreA or GreB allows the resumption of elongation from the new 3'terminus. GreA releases sequences of 2 to 3 nucleotides. The chain is Transcription elongation factor GreA from Xylella fastidiosa (strain M23).